A 490-amino-acid chain; its full sequence is Ketol-acid reductoisomerase (NADP(+)) (490 aa).

The KARI N-terminal Rossmann domain maps to 16-207 (INKCRFMKKE…GGHRAGVLES (192 aa)). NADP(+)-binding positions include 44-47 (CGAQ), K67, S77, and 107-109 (DKQ). The active site involves H131. Position 157 (G157) interacts with NADP(+). 2 consecutive KARI C-terminal knotted domains span residues 208–343 (SFIA…TAPV) and 344–483 (YNEK…MKKM). 4 residues coordinate Mg(2+): D216, E220, E388, and E392. S413 is a binding site for substrate.

This sequence belongs to the ketol-acid reductoisomerase family. Mg(2+) is required as a cofactor.

The enzyme catalyses (2R)-2,3-dihydroxy-3-methylbutanoate + NADP(+) = (2S)-2-acetolactate + NADPH + H(+). The catalysed reaction is (2R,3R)-2,3-dihydroxy-3-methylpentanoate + NADP(+) = (S)-2-ethyl-2-hydroxy-3-oxobutanoate + NADPH + H(+). It participates in amino-acid biosynthesis; L-isoleucine biosynthesis; L-isoleucine from 2-oxobutanoate: step 2/4. The protein operates within amino-acid biosynthesis; L-valine biosynthesis; L-valine from pyruvate: step 2/4. Involved in the biosynthesis of branched-chain amino acids (BCAA). Catalyzes an alkyl-migration followed by a ketol-acid reduction of (S)-2-acetolactate (S2AL) to yield (R)-2,3-dihydroxy-isovalerate. In the isomerase reaction, S2AL is rearranged via a Mg-dependent methyl migration to produce 3-hydroxy-3-methyl-2-ketobutyrate (HMKB). In the reductase reaction, this 2-ketoacid undergoes a metal-dependent reduction by NADPH to yield (R)-2,3-dihydroxy-isovalerate. This chain is Ketol-acid reductoisomerase (NADP(+)), found in Buchnera aphidicola subsp. Acyrthosiphon pisum (strain 5A).